Here is a 90-residue protein sequence, read N- to C-terminus: Antitoxin epsilon (90 aa).

This sequence belongs to the epsilon antitoxin family. In the presence of the zeta toxin, forms an inactive PezA(2)PezT(2) heterotetramer.

Functionally, antitoxin component of a type II toxin-antitoxin (TA) system. Neutralizes the toxic effect of cognate zeta toxin. Part of a postsegregational killing (PSK) system involved in the killing of plasmid-free cells. Continuous synthesis of the epsilon antitoxin is required to counteract the zeta toxin. The chain is Antitoxin epsilon from Streptococcus agalactiae.